The primary structure comprises 390 residues: DNA replication and repair protein RecF (390 aa).

30 to 37 contacts ATP; that stretch reads GDNAQGKS.

Belongs to the RecF family.

Its subcellular location is the cytoplasm. Its function is as follows. The RecF protein is involved in DNA metabolism; it is required for DNA replication and normal SOS inducibility. RecF binds preferentially to single-stranded, linear DNA. It also seems to bind ATP. The protein is DNA replication and repair protein RecF of Trichodesmium erythraeum (strain IMS101).